A 61-amino-acid polypeptide reads, in one-letter code: Large ribosomal subunit protein bL32 (61 aa).

The segment covering 1–16 (MAVPKRKTSPSRRGMR) has biased composition (basic residues). The disordered stretch occupies residues 1–44 (MAVPKRKTSPSRRGMRRSADALKAPTYVEDKDSGELRRPHHIDL). The span at 28-44 (VEDKDSGELRRPHHIDL) shows a compositional bias: basic and acidic residues.

It belongs to the bacterial ribosomal protein bL32 family.

This chain is Large ribosomal subunit protein bL32, found in Methylobacterium nodulans (strain LMG 21967 / CNCM I-2342 / ORS 2060).